The following is a 448-amino-acid chain: NK1 transcription factor-related protein 1 (448 aa).

Positions 1–13 (MSASGPEAPGDIP) are enriched in low complexity. 3 disordered regions span residues 1–80 (MSAS…LRPT), 115–299 (ASAP…PRRA), and 350–397 (KWKK…GAPL). Pro residues predominate over residues 14 to 30 (ALPPPPQPGSGPAPPAP). Composition is skewed to low complexity over residues 62–79 (PAAP…PLRP) and 115–129 (ASAP…SGRP). Residues 130-139 (PRAEELERRA) are compositionally biased toward basic and acidic residues. The span at 186-203 (SGDEVPDDEDDDEDEAPE) shows a compositional bias: acidic residues. Basic and acidic residues predominate over residues 205-214 (EAARGAEEAR). 2 stretches are compositionally biased toward gly residues: residues 215 to 227 (GGGG…GSGC) and 259 to 270 (PPGGAAAPGGAG). The span at 271-280 (TTPQGTATAA) shows a compositional bias: low complexity. A DNA-binding region (homeobox) is located at residues 296 to 355 (PRRARTAFTYEQLVALENKFKATRYLSVCERLNLALSLSLTETQVKIWFQNRRTKWKKQN). The segment covering 364 to 382 (TGGGGGPGPGAGPGTGLPG) has biased composition (gly residues).

This sequence belongs to the NK-1 homeobox family. Expressed in hemopoietic progenitor cells.

The protein resides in the nucleus. Functionally, may be required for the coordinated crosstalk of factors involved in the maintenance of energy homeostasis, possibly by regulating the transcription of specific factors involved in energy balance. The protein is NK1 transcription factor-related protein 1 of Homo sapiens (Human).